The chain runs to 400 residues: 1-deoxy-D-xylulose 5-phosphate reductoisomerase (400 aa).

NADPH-binding residues include threonine 17, glycine 18, serine 19, isoleucine 20, and asparagine 131. Residue lysine 132 participates in 1-deoxy-D-xylulose 5-phosphate binding. Glutamate 133 lines the NADPH pocket. Aspartate 157 is a Mn(2+) binding site. 1-deoxy-D-xylulose 5-phosphate contacts are provided by serine 158, glutamate 159, serine 188, and histidine 211. Mn(2+) is bound at residue glutamate 159. An NADPH-binding site is contributed by glycine 217. Residues serine 224, asparagine 229, lysine 230, and glutamate 233 each contribute to the 1-deoxy-D-xylulose 5-phosphate site. Residue glutamate 233 coordinates Mn(2+).

The protein belongs to the DXR family. Mg(2+) serves as cofactor. It depends on Mn(2+) as a cofactor.

The enzyme catalyses 2-C-methyl-D-erythritol 4-phosphate + NADP(+) = 1-deoxy-D-xylulose 5-phosphate + NADPH + H(+). It functions in the pathway isoprenoid biosynthesis; isopentenyl diphosphate biosynthesis via DXP pathway; isopentenyl diphosphate from 1-deoxy-D-xylulose 5-phosphate: step 1/6. In terms of biological role, catalyzes the NADPH-dependent rearrangement and reduction of 1-deoxy-D-xylulose-5-phosphate (DXP) to 2-C-methyl-D-erythritol 4-phosphate (MEP). This chain is 1-deoxy-D-xylulose 5-phosphate reductoisomerase, found in Pseudomonas putida (strain ATCC 700007 / DSM 6899 / JCM 31910 / BCRC 17059 / LMG 24140 / F1).